The chain runs to 117 residues: Large ribosomal subunit protein eL30B (117 aa).

The span at 1-14 (MSAAPTTAPVAAVS) shows a compositional bias: low complexity. Residues 1–22 (MSAAPTTAPVAAVSKKGKKSGD) are disordered.

This sequence belongs to the eukaryotic ribosomal protein eL30 family. As to quaternary structure, component of the large ribosomal subunit (LSU). Mature yeast ribosomes consist of a small (40S) and a large (60S) subunit. The 40S small subunit contains 1 molecule of ribosomal RNA (18S rRNA) and at least 33 different proteins. The large 60S subunit contains 3 rRNA molecules (25S, 5.8S and 5S rRNA) and at least 46 different proteins.

The protein resides in the cytoplasm. Its function is as follows. Component of the ribosome, a large ribonucleoprotein complex responsible for the synthesis of proteins in the cell. The small ribosomal subunit (SSU) binds messenger RNAs (mRNAs) and translates the encoded message by selecting cognate aminoacyl-transfer RNA (tRNA) molecules. The large subunit (LSU) contains the ribosomal catalytic site termed the peptidyl transferase center (PTC), which catalyzes the formation of peptide bonds, thereby polymerizing the amino acids delivered by tRNAs into a polypeptide chain. The nascent polypeptides leave the ribosome through a tunnel in the LSU and interact with protein factors that function in enzymatic processing, targeting, and the membrane insertion of nascent chains at the exit of the ribosomal tunnel. In Schizosaccharomyces pombe (strain 972 / ATCC 24843) (Fission yeast), this protein is Large ribosomal subunit protein eL30B (rpl3002).